The sequence spans 117 residues: Gamma-aminobutyric acid receptor-associated protein-like 1 (117 aa).

Gly-116 carries Phosphatidylethanolamine amidated glycine; alternate lipidation. Residue Gly-116 is the site of Phosphatidylserine amidated glycine; alternate attachment. Lys-117 is a propeptide (removed in mature form).

Belongs to the ATG8 family. Interacts with ATG13, OPRK1, RB1CC1 and ULK1. Interacts with TP53INP1 and TP53INP2. Directly interacts with SQSTM1. Interacts with ATG3, ATG7 and MAP15. Interacts with TECPR2. Interacts with TBC1D5. Interacts with MAPK15. Interacts with TRIM5. Interacts with MEFV and TRIM21. Interacts with WDFY3. Interacts with the reticulophagy receptor TEX264. Interacts with UBA5. Interacts with KBTBD6 and KBTBD7; the interaction is direct. Interacts with reticulophagy regulators RETREG1, RETREG2 and RETREG3. Interacts with IRGM. Interacts with DNM2. Interacts with NCOA4 (via C-terminus). In terms of processing, the precursor molecule is cleaved by ATG4 (ATG4A, ATG4B, ATG4C or ATG4D) to expose the glycine at the C-terminus and form the cytosolic form, GABARAPL1-I. The processed form is then activated by APG7L/ATG7, transferred to ATG3 and conjugated to phosphatidylethanolamine (PE) phospholipid to form the membrane-bound form, GABARAPL1-II. During non-canonical autophagy, the processed form is conjugated to phosphatidylserine (PS) phospholipid. ATG4 proteins also mediate the delipidation of PE-conjugated forms required for GABARAPL1 recycling when autophagosomes fuse with lysosomes. In addition, ATG4B and ATG4D mediate delipidation of ATG8 proteins conjugated to PS during non-canonical autophagy. ATG4B constitutes the major protein for proteolytic activation. ATG4D is the main enzyme for delipidation activity.

The protein localises to the cytoplasmic vesicle. It localises to the autophagosome. The protein resides in the cytoplasmic vesicle membrane. It is found in the cytoplasm. Its subcellular location is the cytoskeleton. The protein localises to the endoplasmic reticulum. It localises to the golgi apparatus. In terms of biological role, ubiquitin-like modifier that increases cell-surface expression of kappa-type opioid receptor through facilitating anterograde intracellular trafficking of the receptor. Involved in formation of autophagosomal vacuoles. While LC3s are involved in elongation of the phagophore membrane, the GABARAP/GATE-16 subfamily is essential for a later stage in autophagosome maturation. Through its interaction with the reticulophagy receptor TEX264, participates in the remodeling of subdomains of the endoplasmic reticulum into autophagosomes upon nutrient stress, which then fuse with lysosomes for endoplasmic reticulum turnover. The sequence is that of Gamma-aminobutyric acid receptor-associated protein-like 1 from Pongo abelii (Sumatran orangutan).